The chain runs to 310 residues: Methionyl-tRNA formyltransferase (310 aa).

109–112 (SLLP) serves as a coordination point for (6S)-5,6,7,8-tetrahydrofolate.

It belongs to the Fmt family.

The enzyme catalyses L-methionyl-tRNA(fMet) + (6R)-10-formyltetrahydrofolate = N-formyl-L-methionyl-tRNA(fMet) + (6S)-5,6,7,8-tetrahydrofolate + H(+). In terms of biological role, attaches a formyl group to the free amino group of methionyl-tRNA(fMet). The formyl group appears to play a dual role in the initiator identity of N-formylmethionyl-tRNA by promoting its recognition by IF2 and preventing the misappropriation of this tRNA by the elongation apparatus. In Chloroflexus aurantiacus (strain ATCC 29366 / DSM 635 / J-10-fl), this protein is Methionyl-tRNA formyltransferase.